The primary structure comprises 444 residues: ATP-dependent protease ATPase subunit HslU (444 aa).

ATP is bound by residues isoleucine 18, 60–65 (GVGKTE), aspartate 256, glutamate 322, and arginine 394.

Belongs to the ClpX chaperone family. HslU subfamily. As to quaternary structure, a double ring-shaped homohexamer of HslV is capped on each side by a ring-shaped HslU homohexamer. The assembly of the HslU/HslV complex is dependent on binding of ATP.

It localises to the cytoplasm. Functionally, ATPase subunit of a proteasome-like degradation complex; this subunit has chaperone activity. The binding of ATP and its subsequent hydrolysis by HslU are essential for unfolding of protein substrates subsequently hydrolyzed by HslV. HslU recognizes the N-terminal part of its protein substrates and unfolds these before they are guided to HslV for hydrolysis. This chain is ATP-dependent protease ATPase subunit HslU, found in Serratia proteamaculans (strain 568).